The chain runs to 308 residues: ADP-L-glycero-D-manno-heptose-6-epimerase (308 aa).

NADP(+) is bound by residues 10 to 11, 31 to 32, Lys38, Lys53, 75 to 79, and Asn92; these read FI, DN, and EGACS. Tyr139 functions as the Proton acceptor in the catalytic mechanism. Lys143 contributes to the NADP(+) binding site. A substrate-binding site is contributed by Asn168. NADP(+) contacts are provided by Val169 and Lys177. The active-site Proton acceptor is Lys177. Residues Ser179, His186, 200 to 203, Arg208, and Tyr271 each bind substrate; that span reads FAGS.

This sequence belongs to the NAD(P)-dependent epimerase/dehydratase family. HldD subfamily. As to quaternary structure, homopentamer. NADP(+) is required as a cofactor.

It catalyses the reaction ADP-D-glycero-beta-D-manno-heptose = ADP-L-glycero-beta-D-manno-heptose. The protein operates within nucleotide-sugar biosynthesis; ADP-L-glycero-beta-D-manno-heptose biosynthesis; ADP-L-glycero-beta-D-manno-heptose from D-glycero-beta-D-manno-heptose 7-phosphate: step 4/4. Functionally, catalyzes the interconversion between ADP-D-glycero-beta-D-manno-heptose and ADP-L-glycero-beta-D-manno-heptose via an epimerization at carbon 6 of the heptose. The protein is ADP-L-glycero-D-manno-heptose-6-epimerase of Haemophilus influenzae (strain 86-028NP).